The sequence spans 371 residues: Cytochrome b (371 aa).

The next 4 helical transmembrane spans lie at 25 to 45 (FGSMLLSCLMLQVTTGFFLAV), 69 to 90 (WMMQNTHAIGASLFFICIYIHI), 105 to 125 (WMSGTTLLITLMATAFFGYIL), and 170 to 190 (FFALHFILPFIIISLSSLHIL). Residues H75 and H89 each coordinate heme b. Residues H174 and H188 each contribute to the heme b site. Residue H193 participates in a ubiquinone binding. 4 consecutive transmembrane segments (helical) span residues 218–238 (YKDLLLLTLLLTLLLLTTFFL), 280–300 (LGGALALVASILIIMTMPFTH), 312–332 (MSQLMFWTLISTFMTITWAAT), and 339–358 (FMMISQTASMIYFMFFISNP).

This sequence belongs to the cytochrome b family. As to quaternary structure, the cytochrome bc1 complex contains 3 respiratory subunits (MT-CYB, CYC1 and UQCRFS1), 2 core proteins (UQCRC1 and UQCRC2) and probably 6 low-molecular weight proteins. It depends on heme b as a cofactor.

It localises to the mitochondrion inner membrane. Its function is as follows. Component of the ubiquinol-cytochrome c reductase complex (complex III or cytochrome b-c1 complex) that is part of the mitochondrial respiratory chain. The b-c1 complex mediates electron transfer from ubiquinol to cytochrome c. Contributes to the generation of a proton gradient across the mitochondrial membrane that is then used for ATP synthesis. The sequence is that of Cytochrome b (MT-CYB) from Casarea dussumieri (Round Island keel-scaled boa).